We begin with the raw amino-acid sequence, 83 residues long: Retinal cone rhodopsin-sensitive cGMP 3',5'-cyclic phosphodiesterase subunit gamma (83 aa).

The segment at 1-54 (MSDSPSLSPPAPSQGPTTPRKGPPKFKQRQTRQFKSKPPKKGVKGFGDDIPGME) is disordered. Basic residues predominate over residues 22–43 (GPPKFKQRQTRQFKSKPPKKGV).

Belongs to the rod/cone cGMP-PDE gamma subunit family. As to quaternary structure, tetramer composed of two catalytic chains (alpha and beta), and two inhibitory chains (gamma).

It catalyses the reaction 3',5'-cyclic GMP + H2O = GMP + H(+). Participates in processes of transmission and amplification of the visual signal. cGMP-PDEs are the effector molecules in G-protein-mediated phototransduction in vertebrate rods and cones. This chain is Retinal cone rhodopsin-sensitive cGMP 3',5'-cyclic phosphodiesterase subunit gamma (Pde6h), found in Mus musculus (Mouse).